The primary structure comprises 1156 residues: Protein hu-li tai shao (1156 aa).

The disordered stretch occupies residues 1-36; that stretch reads MTEVEQPPQNGIDPTAGEDDDNSKARPADIEQDMRE. Residues 22-36 are compositionally biased toward basic and acidic residues; that stretch reads NSKARPADIEQDMRE. Position 478 is a phosphoserine (Ser478). A phosphothreonine mark is found at Thr480 and Thr498. At Ser603 the chain carries Phosphoserine. Tyr608 is subject to Phosphotyrosine. Thr609 and Thr611 each carry phosphothreonine. A Phosphoserine modification is found at Ser614. A Phosphotyrosine modification is found at Tyr627. The residue at position 630 (Ser630) is a Phosphoserine. The interval 897–956 is disordered; that stretch reads FLPSNHALPKDTDANNRDQTDRERPEAEQEESFHCAGDSGIGDSTGRRPRLATTSNDSSI. Basic and acidic residues predominate over residues 904–929; it reads LPKDTDANNRDQTDRERPEAEQEESF.

Belongs to the aldolase class II family. Adducin subfamily. Isoform C is expressed in nurse cells. Isoform A is produced in the nurse cell but transported into the oocyte at stage 1, localizes to the oocyte cortex at stage 8 and to the anterior pole from day 9 onwards. Isoform B is expressed in the somatic follicle cells that surround the germline.

It localises to the cytoplasm. It is found in the cytoskeleton. Its subcellular location is the cell membrane. Its function is as follows. Required for assembling actin at ring canals in developing egg chambers. Probably interacts with other developmental proteins involved in nurse cell/oocyte transport through the ring canals. Important for normal neuromotor function. This is Protein hu-li tai shao (hts) from Drosophila melanogaster (Fruit fly).